A 214-amino-acid chain; its full sequence is Auxin-binding protein ABP20 (214 aa).

Positions 1–23 (MPQATMIFPILFTFFLLLSSSNA) are cleaved as a signal peptide. Residues Cys-29 and Cys-44 are joined by a disulfide bond. A Cupin type-1 domain is found at 58 to 204 (SGLGIAGNTS…TTFLDAAQIK (147 aa)). An N-linked (GlcNAc...) asparagine glycan is attached at Asn-65. Mn(2+) contacts are provided by His-106, His-108, Glu-113, and His-152.

This sequence belongs to the germin family. Interacts with ABP19.

It localises to the secreted. The protein localises to the extracellular space. It is found in the apoplast. The protein resides in the cell wall. Functionally, probable receptor for the plant growth-promoting hormone auxin. In Prunus persica (Peach), this protein is Auxin-binding protein ABP20 (ABP20).